The chain runs to 222 residues: Fibrillarin-like rRNA/tRNA 2'-O-methyltransferase (222 aa).

Residues 86 to 87, 104 to 105, 129 to 130, and 149 to 152 each bind S-adenosyl-L-methionine; these read TT, EV, DA, and DISQ.

It belongs to the methyltransferase superfamily. Fibrillarin family. In terms of assembly, interacts with nop5. Component of box C/D small ribonucleoprotein (sRNP) particles that contain rpl7ae, FlpA and nop5, plus a guide RNA.

Functionally, involved in pre-rRNA and tRNA processing. Utilizes the methyl donor S-adenosyl-L-methionine to catalyze the site-specific 2'-hydroxyl methylation of ribose moieties in rRNA and tRNA. Site specificity is provided by a guide RNA that base pairs with the substrate. Methylation occurs at a characteristic distance from the sequence involved in base pairing with the guide RNA. The chain is Fibrillarin-like rRNA/tRNA 2'-O-methyltransferase from Thermoplasma volcanium (strain ATCC 51530 / DSM 4299 / JCM 9571 / NBRC 15438 / GSS1).